We begin with the raw amino-acid sequence, 84 residues long: Large ribosomal subunit protein bL27 (84 aa).

A disordered region spans residues 1–25 (MAHKKAGGSSKNGRDSAGKRLGVKR).

This sequence belongs to the bacterial ribosomal protein bL27 family.

This chain is Large ribosomal subunit protein bL27, found in Syntrophotalea carbinolica (strain DSM 2380 / NBRC 103641 / GraBd1) (Pelobacter carbinolicus).